The sequence spans 168 residues: Small ribosomal subunit protein uS5 (168 aa).

The region spanning 13 to 76 (LAEKLIAVNR…EKARRNMINV (64 aa)) is the S5 DRBM domain.

This sequence belongs to the universal ribosomal protein uS5 family. As to quaternary structure, part of the 30S ribosomal subunit. Contacts proteins S4 and S8.

In terms of biological role, with S4 and S12 plays an important role in translational accuracy. Functionally, located at the back of the 30S subunit body where it stabilizes the conformation of the head with respect to the body. The polypeptide is Small ribosomal subunit protein uS5 (Pseudoalteromonas translucida (strain TAC 125)).